The chain runs to 325 residues: Probable cell division protein WhiA (325 aa).

Positions 273–306 (SLEELGALADPPLTKDAVAGRIRRLLALADKRAN) form a DNA-binding region, H-T-H motif.

This sequence belongs to the WhiA family.

Functionally, involved in cell division and chromosome segregation. The polypeptide is Probable cell division protein WhiA (Frankia casuarinae (strain DSM 45818 / CECT 9043 / HFP020203 / CcI3)).